The sequence spans 239 residues: MGHRIKTQNRGRGGPTYRAPSHQYKAELKHLGNDKVTVRGVIIDIEHDPARHTPIALVRLEGEGKKVYLLVTEGLGVGDQVAWGPEAEVKNGNTLPISKIPTGSYICNIEARPGDGGKFVRASGVQAIIIDKTVDRVGVKMPSGKMKWFSSRCLATVGVVAGGGRGEKPFVKAGKKFHKVKSQATYWPRVRGVAMNVIDHPFGGGGHQHTGRPKTVSRGTSPGRKVGSVAARRTGRRKR.

2 disordered regions span residues 1 to 20 (MGHR…YRAP) and 202 to 239 (FGGG…RRKR).

Belongs to the universal ribosomal protein uL2 family. Part of the 50S ribosomal subunit. Forms a bridge to the 30S subunit in the 70S ribosome.

In terms of biological role, one of the primary rRNA binding proteins. Required for association of the 30S and 50S subunits to form the 70S ribosome, for tRNA binding and peptide bond formation. It has been suggested to have peptidyltransferase activity; this is somewhat controversial. Makes several contacts with the 16S rRNA in the 70S ribosome. The polypeptide is Large ribosomal subunit protein uL2 (Methanosphaerula palustris (strain ATCC BAA-1556 / DSM 19958 / E1-9c)).